Consider the following 191-residue polypeptide: MKVVIGLGNPGKKYEKTRHNIGFIAVDNLRKKFNISDEREKFQALVSEKNIDGEKVIFFKPQTFMNLSGNSVIEIINFYKLDPKKDIIVIYDDMDLSFGDIRIREKGSSGGHNGIKSIISHIGEEFIRIKCGIGAKERDAVEHVLGEFNQTEQKDLDEILEKINNCVIEMLSVQNLDRIMQKYNKKKEISK.

Tyr14 contacts tRNA. The Proton acceptor role is filled by His19. Phe64, Asn66, and Asn113 together coordinate tRNA.

This sequence belongs to the PTH family. As to quaternary structure, monomer.

It localises to the cytoplasm. It catalyses the reaction an N-acyl-L-alpha-aminoacyl-tRNA + H2O = an N-acyl-L-amino acid + a tRNA + H(+). Its function is as follows. Hydrolyzes ribosome-free peptidyl-tRNAs (with 1 or more amino acids incorporated), which drop off the ribosome during protein synthesis, or as a result of ribosome stalling. In terms of biological role, catalyzes the release of premature peptidyl moieties from peptidyl-tRNA molecules trapped in stalled 50S ribosomal subunits, and thus maintains levels of free tRNAs and 50S ribosomes. The sequence is that of Peptidyl-tRNA hydrolase from Fusobacterium nucleatum subsp. nucleatum (strain ATCC 25586 / DSM 15643 / BCRC 10681 / CIP 101130 / JCM 8532 / KCTC 2640 / LMG 13131 / VPI 4355).